Here is a 1233-residue protein sequence, read N- to C-terminus: Pesticidal crystal protein Cry1Bc (1233 aa).

Belongs to the delta endotoxin family.

Promotes colloidosmotic lysis by binding to the midgut epithelial cells of insects. This is Pesticidal crystal protein Cry1Bc (cry1Bc) from Bacillus thuringiensis subsp. morrisoni.